The chain runs to 466 residues: Nitric oxide reductase subunit B (466 aa).

The chain crosses the membrane as a helical span at residues 19–39 (YFVFALILFVGQILFGLIMGL). His60 provides a ligand contact to heme b. 8 consecutive transmembrane segments (helical) span residues 61–81 (TNLL…YLVP), 95–115 (WILF…YLLV), 142–162 (ISKA…GMTV), 169–189 (AISM…LFSF), 205–225 (VVHL…LAFV), 243–263 (VIIA…YFWI), 270–290 (LWLG…MVLF), and 308–328 (VALW…VWGF). Residues His207, His258, and His259 each contribute to the Fe cation site. Heme b-binding residues include His348 and His350. The next 3 helical transmembrane spans lie at 349-369 (GHMA…SYAM), 391-411 (FWLM…AGVL), and 434-454 (LAIF…GLVA).

This sequence belongs to the heme-copper respiratory oxidase family. Heterodimer of cytochromes b (large subunit) and c (small subunit).

The protein localises to the cell membrane. The enzyme catalyses nitrous oxide + 2 Fe(III)-[cytochrome c] + H2O = 2 nitric oxide + 2 Fe(II)-[cytochrome c] + 2 H(+). It participates in nitrogen metabolism; nitrate reduction (denitrification); dinitrogen from nitrate: step 3/4. Component of the anaerobic respiratory chain that transforms nitrate to dinitrogen (denitrification). NorB is the catalytic subunit of the enzyme complex. Shows proton pump activity across the membrane in denitrifying bacterial cells. The mononitrogen reduction is probably coupled to electron transport phosphorylation. The polypeptide is Nitric oxide reductase subunit B (norB) (Pseudomonas aeruginosa (strain ATCC 15692 / DSM 22644 / CIP 104116 / JCM 14847 / LMG 12228 / 1C / PRS 101 / PAO1)).